The sequence spans 124 residues: Small ribosomal subunit protein bS6 (124 aa).

Residues 96 to 124 are disordered; it reads ETAPSPMMKEVQREEARKAAQTTTEGQAA. Residues 115 to 124 are compositionally biased toward polar residues; it reads AQTTTEGQAA.

The protein belongs to the bacterial ribosomal protein bS6 family.

Its function is as follows. Binds together with bS18 to 16S ribosomal RNA. This is Small ribosomal subunit protein bS6 from Cupriavidus necator (strain ATCC 17699 / DSM 428 / KCTC 22496 / NCIMB 10442 / H16 / Stanier 337) (Ralstonia eutropha).